The following is a 341-amino-acid chain: Ketol-acid reductoisomerase (NADP(+)) (341 aa).

The KARI N-terminal Rossmann domain occupies 2-181; the sequence is AKVYYNGDAN…GATRAGVLET (180 aa). NADP(+) is bound by residues 25–28, Arg48, Ser52, and 82–85; these read YGSQ and DEKQ. His107 is an active-site residue. Gly133 lines the NADP(+) pocket. One can recognise a KARI C-terminal knotted domain in the interval 182-327; sequence TFKEETETDL…RELRSMMPFV (146 aa). Residues Asp190, Glu194, Glu226, and Glu230 each contribute to the Mg(2+) site. Ser251 is a substrate binding site.

This sequence belongs to the ketol-acid reductoisomerase family. Requires Mg(2+) as cofactor.

It catalyses the reaction (2R)-2,3-dihydroxy-3-methylbutanoate + NADP(+) = (2S)-2-acetolactate + NADPH + H(+). The catalysed reaction is (2R,3R)-2,3-dihydroxy-3-methylpentanoate + NADP(+) = (S)-2-ethyl-2-hydroxy-3-oxobutanoate + NADPH + H(+). The protein operates within amino-acid biosynthesis; L-isoleucine biosynthesis; L-isoleucine from 2-oxobutanoate: step 2/4. It participates in amino-acid biosynthesis; L-valine biosynthesis; L-valine from pyruvate: step 2/4. Its function is as follows. Involved in the biosynthesis of branched-chain amino acids (BCAA). Catalyzes an alkyl-migration followed by a ketol-acid reduction of (S)-2-acetolactate (S2AL) to yield (R)-2,3-dihydroxy-isovalerate. In the isomerase reaction, S2AL is rearranged via a Mg-dependent methyl migration to produce 3-hydroxy-3-methyl-2-ketobutyrate (HMKB). In the reductase reaction, this 2-ketoacid undergoes a metal-dependent reduction by NADPH to yield (R)-2,3-dihydroxy-isovalerate. This chain is Ketol-acid reductoisomerase (NADP(+)), found in Geobacillus sp. (strain WCH70).